A 422-amino-acid chain; its full sequence is Interferon-induced protein 44 (422 aa).

Residues 1-147 (MAMRTRLTWQ…IQECEAFRCE (147 aa)) enclose the TLDc domain.

The protein belongs to the IFI44 family.

The protein resides in the cytoplasm. Functionally, this protein aggregates to form microtubular structures. The protein is Interferon-induced protein 44 (Ifi44) of Mus musculus (Mouse).